The sequence spans 192 residues: MKLLEDRIKKDGEVLDGDVLKINSFLNHQVDPQLMMQCGEEFKRLFADQKIDKVLTCEASGIAPGVMTAYVLDVPMVFARKKKPSTLNDAVYWADVFSYTKKVNNKICVEEKLLHKGENLLIIDDFVAQGEAVKGMVNIAKQAECNIVGVGAVVAKTFQGGSDWVKQHGLHFEALASIDSFKDGQVHFGKEN.

Leu-20 and Asn-27 together coordinate xanthine. Residue 128–132 coordinates 5-phospho-alpha-D-ribose 1-diphosphate; the sequence is AQGEA. Lys-156 lines the xanthine pocket.

The protein belongs to the purine/pyrimidine phosphoribosyltransferase family. Xpt subfamily. Homodimer.

The protein localises to the cytoplasm. It carries out the reaction XMP + diphosphate = xanthine + 5-phospho-alpha-D-ribose 1-diphosphate. It participates in purine metabolism; XMP biosynthesis via salvage pathway; XMP from xanthine: step 1/1. Its function is as follows. Converts the preformed base xanthine, a product of nucleic acid breakdown, to xanthosine 5'-monophosphate (XMP), so it can be reused for RNA or DNA synthesis. The sequence is that of Xanthine phosphoribosyltransferase from Lactobacillus helveticus (strain DPC 4571).